The primary structure comprises 628 residues: WW domain-containing adapter protein with coiled-coil (628 aa).

3 disordered regions span residues 1-130 (MVMY…DDWS), 152-338 (EKPK…PQSP), and 417-532 (NQSP…SARS). The span at 37-49 (SSDHRHDKMRDST) shows a compositional bias: basic and acidic residues. Basic residues predominate over residues 74 to 84 (GKAKSMHLHRV). Low complexity predominate over residues 101-121 (NHSAIHSSNSHSSTPSKTSDS). A WW domain is found at 123 to 156 (YDPADDWSEHISSSGKKYYYNCRTEVSQWEKPKE). Composition is skewed to basic and acidic residues over residues 152–168 (EKPK…KETS) and 176–185 (PKDRDYRREA). Over residues 199–213 (DTSTMLPQNILSQTS) the composition is skewed to polar residues. Over residues 214-227 (RHNDRDYRLPRTDS) the composition is skewed to basic and acidic residues. Composition is skewed to low complexity over residues 230-260 (SAAP…TVQP) and 299-331 (SDKS…TVPV). The span at 420–446 (PMSLTSDASSPRSYVSPRISTPQTNTV) shows a compositional bias: polar residues. Positions 467–486 (GSKQGSSAQTASQQSSAADK) are enriched in low complexity. Polar residues predominate over residues 511–532 (PNHNSSTCASSTSAPQNSSARS). Positions 599 to 625 (QATLREQRILFLRQQIKELEKLKNQNS) form a coiled coil.

The protein localises to the nucleus. Its function is as follows. Acts as a linker between gene transcription and histone H2B monoubiquitination at 'Lys-120' (H2BK120ub1). Positive regulator of amino acid starvation-induced autophagy. Positively regulates MTOR activity. May negatively regulate the ubiquitin proteasome pathway. This chain is WW domain-containing adapter protein with coiled-coil (wac), found in Xenopus tropicalis (Western clawed frog).